The sequence spans 194 residues: Troponin I 4 (194 aa).

The segment at 1–27 (MSDVDADEARKMAERERKKEEVRKRLE) is disordered. The segment covering 7 to 27 (DEARKMAERERKKEEVRKRLE) has biased composition (basic and acidic residues).

Belongs to the troponin I family. In terms of tissue distribution, expression is detected only in pharyngeal muscle cells from embryos to adults.

Its function is as follows. Troponin I is the inhibitory subunit of troponin, the thin filament regulatory complex which confers calcium-sensitivity to muscle actomyosin ATPase activity. The polypeptide is Troponin I 4 (tni-4) (Caenorhabditis elegans).